A 24-amino-acid chain; its full sequence is Neurotoxin 5 (24 aa).

The region spanning 2 to 24 is the LCN-type CS-alpha/beta domain; the sequence is RDAYIAQNYNCVYTCFKNDYCND.

The protein belongs to the long (4 C-C) scorpion toxin superfamily. Sodium channel inhibitor family. Alpha subfamily. Expressed by the venom gland.

The protein resides in the secreted. Its function is as follows. Binds to sodium channels (Nav) and inhibits the inactivation of the activated channels, thereby blocking neuronal transmission. The sequence is that of Neurotoxin 5 from Buthus occitanus tunetanus (Common European scorpion).